The sequence spans 142 residues: PDZ domain-containing protein 11 (142 aa).

One can recognise a PDZ domain in the interval 49–131 (TIVLKKPPGA…ILMKVRYFPY (83 aa)).

It localises to the cytoplasm. In Danio rerio (Zebrafish), this protein is PDZ domain-containing protein 11 (pdzd11).